A 158-amino-acid chain; its full sequence is Regulator of sigma D (158 aa).

This sequence belongs to the Rsd/AlgQ family. In terms of assembly, interacts with RpoD.

Its subcellular location is the cytoplasm. Functionally, binds RpoD and negatively regulates RpoD-mediated transcription activation by preventing the interaction between the primary sigma factor RpoD with the catalytic core of the RNA polymerase and with promoter DNA. May be involved in replacement of the RNA polymerase sigma subunit from RpoD to RpoS during the transition from exponential growth to the stationary phase. The sequence is that of Regulator of sigma D from Shigella boydii serotype 4 (strain Sb227).